The following is a 413-amino-acid chain: Putative competence-damage inducible protein (413 aa).

This sequence belongs to the CinA family.

The chain is Putative competence-damage inducible protein from Thermoanaerobacter pseudethanolicus (strain ATCC 33223 / 39E) (Clostridium thermohydrosulfuricum).